Reading from the N-terminus, the 289-residue chain is ATP synthase gamma chain (289 aa).

This sequence belongs to the ATPase gamma chain family. F-type ATPases have 2 components, CF(1) - the catalytic core - and CF(0) - the membrane proton channel. CF(1) has five subunits: alpha(3), beta(3), gamma(1), delta(1), epsilon(1). CF(0) has three main subunits: a, b and c.

It localises to the cell inner membrane. Its function is as follows. Produces ATP from ADP in the presence of a proton gradient across the membrane. The gamma chain is believed to be important in regulating ATPase activity and the flow of protons through the CF(0) complex. This Azobacteroides pseudotrichonymphae genomovar. CFP2 protein is ATP synthase gamma chain.